We begin with the raw amino-acid sequence, 1485 residues long: DNA topoisomerase 2 (1485 aa).

The segment covering 1–16 (MSIDADFSDYEDEASG) has biased composition (acidic residues). The segment at 1–76 (MSIDADFSDY…NGNGNSNVST (76 aa)) is disordered. Polar residues predominate over residues 46 to 59 (DLRQTSLTSMTASE). The span at 64-76 (VTNNGNGNSNVST) shows a compositional bias: low complexity. ATP-binding positions include Asn-136, Asn-165, 193 to 195 (SSN), and 206 to 213 (GRNGYGAK). The tract at residues 388 to 392 (KKENK) is interaction with DNA. ATP is bound at residue 421-423 (QTK). Residues 499–613 (CVLILTEGDS…SLLQIPGFLI (115 aa)) form the Toprim domain. Residues Glu-505, Asp-582, and Asp-584 each contribute to the Mg(2+) site. In terms of domain architecture, Topo IIA-type catalytic spans 745-1195 (IPSVVDGLKP…TPKELWLHDL (451 aa)). The O-(5'-phospho-DNA)-tyrosine intermediate role is filled by Tyr-835. Residues 1019–1028 (KLSRTQATSN) form an interaction with DNA region. Basic and acidic residues predominate over residues 1216–1225 (EEQSSRDFVN). The interval 1216–1485 (EEQSSRDFVN…EDVDDYDESD (270 aa)) is disordered. The span at 1226–1242 (RTKKKPRGKSTGTRKPR) shows a compositional bias: basic residues. Positions 1260–1273 (ESKPSTTNRKQQTL) are enriched in polar residues. The segment covering 1278–1307 (ASKEPEKSSDINIVKTEDNSHGLSVEENRI) has biased composition (basic and acidic residues). Ser-1310 and Ser-1345 each carry phosphoserine. Over residues 1387 to 1396 (AKNKGKKASS) the composition is skewed to basic residues. Residues 1413-1425 (GSSSTPKASSTNA) show a composition bias toward polar residues. Ser-1433 carries the post-translational modification Phosphoserine. The segment covering 1473–1485 (DNDEDVDDYDESD) has biased composition (acidic residues).

This sequence belongs to the type II topoisomerase family. Homodimer. It depends on Mg(2+) as a cofactor. Mn(2+) serves as cofactor. Requires Ca(2+) as cofactor. Phosphorylated at multiple sites at both extremities of the protein.

The protein localises to the nucleus. The catalysed reaction is ATP-dependent breakage, passage and rejoining of double-stranded DNA.. In terms of biological role, control of topological states of DNA by transient breakage and subsequent rejoining of DNA strands. Topoisomerase II makes double-strand breaks. In Schizosaccharomyces pombe (strain 972 / ATCC 24843) (Fission yeast), this protein is DNA topoisomerase 2 (top2).